The sequence spans 330 residues: Molybdate/tungstate import ATP-binding protein WtpC (330 aa).

An ABC transporter domain is found at 3–232; that stretch reads LMVEGISKDY…PASEEVAKFL (230 aa). 34 to 41 provides a ligand contact to ATP; it reads GPSGAGKT.

It belongs to the ABC transporter superfamily. Sulfate/tungstate importer (TC 3.A.1.6) family. In terms of assembly, the complex is composed of two ATP-binding proteins (WtpC), two transmembrane proteins (WtpB) and a solute-binding protein (WtpA).

It localises to the cell membrane. It catalyses the reaction tungstate(in) + ATP + H2O = tungstate(out) + ADP + phosphate + H(+). Functionally, part of the ABC transporter complex WtpABC involved in molybdate/tungstate import. Responsible for energy coupling to the transport system. This chain is Molybdate/tungstate import ATP-binding protein WtpC (wtpC), found in Thermococcus kodakarensis (strain ATCC BAA-918 / JCM 12380 / KOD1) (Pyrococcus kodakaraensis (strain KOD1)).